The primary structure comprises 244 residues: tRNA pseudouridine synthase A (244 aa).

Asp52 serves as the catalytic Nucleophile. Tyr110 serves as a coordination point for substrate.

The protein belongs to the tRNA pseudouridine synthase TruA family. In terms of assembly, homodimer.

It catalyses the reaction uridine(38/39/40) in tRNA = pseudouridine(38/39/40) in tRNA. Formation of pseudouridine at positions 38, 39 and 40 in the anticodon stem and loop of transfer RNAs. This is tRNA pseudouridine synthase A from Acetivibrio thermocellus (strain ATCC 27405 / DSM 1237 / JCM 9322 / NBRC 103400 / NCIMB 10682 / NRRL B-4536 / VPI 7372) (Clostridium thermocellum).